Reading from the N-terminus, the 588-residue chain is MPSIADQLSAVLGDAFASLELPRELGRVSPSKQKPEVFPFQCNGAMPAAKQAKTNPRELAAKLIEALHGIPQIGAAEIAGPGFINLRPAEHLYGERAAEIAGDDRAGAPLAAAPRTVMIDFGGPNVAKPMHVGHLRSSVLGDSLQRLFRFRGDTVVSDIHLGDWGLQMGHLITELHEEQPDLVYFDAAITDGYPSEPPVTIEDLARLYPQASVKAKAGPERLEISRSATAELQAGRPGYRALLRHFIDVSVAALKRDFGALGVHFDLWKGESDVDPLIPGLVEDFKARGVAEESEGALIVRVARDGDKKELAPLILVSKTGAALYGTTDLATILDRKQSVDPDLTLYVVDLAQGDHFEQVFRAAEKAGLAEEGALEHVKFGTVNGTDGKRLRTRDGGTFRLADLIASAIERADERLKEAGLAADVSAEEHARVARMVGLAAIKFADLQNYRTTNYVFDLDRFTSFEGKTGPYLLYAAVRVKSLMRRAAEAGVTPGEILVDAQEERDLVLCLDAFGAALDNAADNRAPNALCDHAFTLAQAFSKFYSACPVLVAEDDAVKASRLALAEATLKQLELCLGLLGLEAPERM.

The short motif at 124-134 is the 'HIGH' region element; it reads PNVAKPMHVGH.

This sequence belongs to the class-I aminoacyl-tRNA synthetase family. Monomer.

The protein localises to the cytoplasm. The catalysed reaction is tRNA(Arg) + L-arginine + ATP = L-arginyl-tRNA(Arg) + AMP + diphosphate. The sequence is that of Arginine--tRNA ligase from Maricaulis maris (strain MCS10) (Caulobacter maris).